A 592-amino-acid polypeptide reads, in one-letter code: Transmembrane 9 superfamily member 3 (592 aa).

Residues 1–19 (MRLPTTLLLFIGALIFSGA) form the signal peptide. Residues 20-229 (GTVRSDASDH…SLPHHLEIHW (210 aa)) are Lumenal-facing. Residues 230–250 (FSIINSCVTVLLLTGFLATIL) form a helical membrane-spanning segment. At 251–302 (MRVLKNDFMKYAQDEEAADDQEETGWKYIHGDVFRFPKNKSLFAASLGSGTQ) the chain is on the cytoplasmic side. The chain crosses the membrane as a helical span at residues 303 to 323 (LFTLTIFIFMLSLVGVFYPYN). The Lumenal portion of the chain corresponds to 324–325 (RG). Residues 326–346 (ALFTALVVIYALTSGIAGYTA) traverse the membrane as a helical segment. The Cytoplasmic portion of the chain corresponds to 347 to 365 (SSFYCQLEGKNWVRNLLLT). A helical transmembrane segment spans residues 366–386 (GGLFCGPLFLTFCFLNTVAIA). The Lumenal portion of the chain corresponds to 387-397 (YSATAALPFGT). Residues 398-418 (IIVIVLIWTLVTSPLLVLGGI) form a helical membrane-spanning segment. Over 419-452 (AGKNSKAEFQAPVRTTKYPREIPPLPWYRSAVPQ) the chain is Cytoplasmic. Residues 453–473 (MAMAGFLPFSAIYIELYYIFA) form a helical membrane-spanning segment. Topologically, residues 474–485 (SVWGHRIYTIYS) are lumenal. Residues 486-506 (ILFIVFIILLIVTAFITVALT) form a helical membrane-spanning segment. Residues 507 to 521 (YFQLAAEDHEWWWRS) lie on the Cytoplasmic side of the membrane. Residues 522 to 542 (FLCGGSTGLFIYAYCLYYYYA) traverse the membrane as a helical segment. Topologically, residues 543–553 (RSDMSGFMQTS) are lumenal. A helical membrane pass occupies residues 554 to 574 (FFFGYMACICYGFFLMLGTVG). Over 575–592 (FRAALLFVRHIYRSIKCE) the chain is Cytoplasmic. The short motif at 581-586 (FVRHIY) is the Endoplasmic reticulum export signal element. Residues 590-592 (KCE) carry the Golgi retention signal motif.

This sequence belongs to the nonaspanin (TM9SF) (TC 9.A.2) family.

The protein localises to the endosome membrane. The protein resides in the golgi apparatus membrane. In Arabidopsis thaliana (Mouse-ear cress), this protein is Transmembrane 9 superfamily member 3.